Reading from the N-terminus, the 494-residue chain is Tripartite motif-containing protein 5 (494 aa).

At A2 the chain carries N-acetylalanine. The RING-type zinc finger occupies 15–59; the sequence is CPICLELLTEPLSLDCGHSFCQACITANHKKSMLHQGERSCPLCR. S86 bears the Phosphoserine mark. The segment at 91–132 adopts a B box-type zinc-finger fold; it reads QKVDHCARHGEKLLLFCQQDGNVICWLCERSQEHRGHHTLLV. Residues C96, H99, C118, and H124 each contribute to the Zn(2+) site. The stretch at 132–222 forms a coiled coil; the sequence is VEEVAQTYRE…KRLTQSENDM (91 aa). The segment at 186 to 199 is required for interaction with GABARAP and for autophagy; that stretch reads FKQLRDILDCEESN. Residues 280–494 form the B30.2/SPRY domain; the sequence is PDLKGMLQVF…LPMTLCSPRS (215 aa).

The protein belongs to the TRIM/RBCC family. In terms of assembly, can form homodimers and homotrimers. In addition to lower-order dimerization, also exhibits a higher-order multimerization and both low- and high-order multimerizations are essential for its restriction activity. Interacts with BTBD1 and BTBD2. Interacts with PSMC4, PSMC5, PSMD7 and HSPA8/HSC70. Interacts (via B30.2/SPRY domain) with HSPA1A/B. Interacts with PSMC2, MAP3K7/TAK1, TAB2 and TAB3. Interacts with SQSTM1. Interacts with TRIM6 and TRIM34. Interacts with ULK1 (phosphorylated form), GABARAP, GABARAPL1, GABARAPL2, MAP1LC3A, MAP1LC3C and BECN1. In terms of processing, degraded in a proteasome-independent fashion in the absence of viral infection but in a proteasome-dependent fashion following exposure to restriction sensitive virus. Autoubiquitinated in a RING finger- and UBE2D2-dependent manner. Monoubiquitinated by TRIM21. Deubiquitinated by Yersinia YopJ. Ubiquitination may not lead to proteasomal degradation.

Its subcellular location is the cytoplasm. It is found in the nucleus. The catalysed reaction is S-ubiquitinyl-[E2 ubiquitin-conjugating enzyme]-L-cysteine + [acceptor protein]-L-lysine = [E2 ubiquitin-conjugating enzyme]-L-cysteine + N(6)-ubiquitinyl-[acceptor protein]-L-lysine.. It participates in protein modification; protein ubiquitination. Capsid-specific restriction factor that prevents infection from non-host-adapted retroviruses. Blocks viral replication early in the life cycle, after viral entry but before reverse transcription. In addition to acting as a capsid-specific restriction factor, also acts as a pattern recognition receptor that activates innate immune signaling in response to the retroviral capsid lattice. Binding to the viral capsid triggers its E3 ubiquitin ligase activity, and in concert with the heterodimeric ubiquitin conjugating enzyme complex UBE2V1-UBE2N (also known as UBC13-UEV1A complex) generates 'Lys-63'-linked polyubiquitin chains, which in turn are catalysts in the autophosphorylation of the MAP3K7/TAK1 complex (includes TAK1, TAB2, and TAB3). Activation of the MAP3K7/TAK1 complex by autophosphorylation results in the induction and expression of NF-kappa-B and MAPK-responsive inflammatory genes, thereby leading to an innate immune response in the infected cell. Plays a role in regulating autophagy through activation of autophagy regulator BECN1 by causing its dissociation from its inhibitors BCL2 and TAB2. This Pithecia pithecia (White-faced saki) protein is Tripartite motif-containing protein 5 (TRIM5).